A 507-amino-acid polypeptide reads, in one-letter code: Steroid 17-alpha-hydroxylase/17,20 lyase (507 aa).

Cys-441 contributes to the heme binding site.

It belongs to the cytochrome P450 family. The cofactor is heme.

It is found in the endoplasmic reticulum membrane. The protein localises to the microsome membrane. It catalyses the reaction a C21-steroid + reduced [NADPH--hemoprotein reductase] + O2 = a 17alpha-hydroxy-C21-steroid + oxidized [NADPH--hemoprotein reductase] + H2O + H(+). The enzyme catalyses progesterone + reduced [NADPH--hemoprotein reductase] + O2 = 17alpha-hydroxyprogesterone + oxidized [NADPH--hemoprotein reductase] + H2O + H(+). It carries out the reaction pregnenolone + reduced [NADPH--hemoprotein reductase] + O2 = 17alpha-hydroxypregnenolone + oxidized [NADPH--hemoprotein reductase] + H2O + H(+). The catalysed reaction is 17alpha-hydroxyprogesterone + reduced [NADPH--hemoprotein reductase] + O2 = androst-4-ene-3,17-dione + acetate + oxidized [NADPH--hemoprotein reductase] + H2O + 2 H(+). It catalyses the reaction 17alpha-hydroxyprogesterone + reduced [NADPH--hemoprotein reductase] + O2 = 16alpha,17alpha-dihydroxyprogesterone + oxidized [NADPH--hemoprotein reductase] + H2O + H(+). The enzyme catalyses 16alpha,17alpha-dihydroxyprogesterone + reduced [NADPH--hemoprotein reductase] + O2 = 6beta,16alpha,17alpha-trihydroxyprogesterone + oxidized [NADPH--hemoprotein reductase] + H2O + H(+). It carries out the reaction 17alpha-hydroxypregnenolone + reduced [NADPH--hemoprotein reductase] + O2 = 3beta-hydroxyandrost-5-en-17-one + acetate + oxidized [NADPH--hemoprotein reductase] + H2O + 2 H(+). The catalysed reaction is 16alpha,17alpha-dihydroxypregnenolone + reduced [NADPH--hemoprotein reductase] + O2 = 3beta,16alpha-dihydroxy-androst-5-en-17-one + acetate + oxidized [NADPH--hemoprotein reductase] + H2O + 2 H(+). It catalyses the reaction 3beta-hydroxyandrost-5-en-17-one + reduced [NADPH--hemoprotein reductase] + O2 = 3beta,16alpha-dihydroxy-androst-5-en-17-one + oxidized [NADPH--hemoprotein reductase] + H2O + H(+). The enzyme catalyses androst-4-ene-3,17-dione + reduced [NADPH--hemoprotein reductase] + O2 = 16alpha-hydroxyandrost-4-ene-3,17-dione + oxidized [NADPH--hemoprotein reductase] + H2O + H(+). It functions in the pathway steroid hormone biosynthesis. It participates in steroid biosynthesis; glucocorticoid biosynthesis. Regulated predominantly by intracellular cAMP levels. The 17,20-lyase activity is stimulated by cytochrome b5, which acts as an allosteric effector increasing the Vmax of the lyase activity. Functionally, a cytochrome P450 monooxygenase involved in corticoid and androgen biosynthesis. Catalyzes 17-alpha hydroxylation of C21 steroids, which is common for both pathways. A second oxidative step, required only for androgen synthesis, involves an acyl-carbon cleavage. The 17-alpha hydroxy intermediates, as part of adrenal glucocorticoids biosynthesis pathway, are precursors of cortisol. Hydroxylates steroid hormones, pregnenolone and progesterone to form 17-alpha hydroxy metabolites, followed by the cleavage of the C17-C20 bond to form C19 steroids, dehydroepiandrosterone (DHEA) and androstenedione. Has 16-alpha hydroxylase activity. Catalyzes 16-alpha hydroxylation of 17-alpha hydroxy pregnenolone, followed by the cleavage of the C17-C20 bond to form 16-alpha-hydroxy DHEA. Also 16-alpha hydroxylates androgens, relevant for estriol synthesis. Mechanistically, uses molecular oxygen inserting one oxygen atom into a substrate, and reducing the second into a water molecule, with two electrons provided by NADPH via cytochrome P450 reductase (CPR; NADPH-ferrihemoprotein reductase). In Rattus norvegicus (Rat), this protein is Steroid 17-alpha-hydroxylase/17,20 lyase (Cyp17a1).